The sequence spans 311 residues: GTP cyclohydrolase FolE2 (311 aa).

It belongs to the GTP cyclohydrolase IV family.

It catalyses the reaction GTP + H2O = 7,8-dihydroneopterin 3'-triphosphate + formate + H(+). It participates in cofactor biosynthesis; 7,8-dihydroneopterin triphosphate biosynthesis; 7,8-dihydroneopterin triphosphate from GTP: step 1/1. Its function is as follows. Converts GTP to 7,8-dihydroneopterin triphosphate. This Xanthomonas campestris pv. campestris (strain 8004) protein is GTP cyclohydrolase FolE2.